A 314-amino-acid polypeptide reads, in one-letter code: DDRGK domain-containing protein 1 (314 aa).

A helical transmembrane segment spans residues 1-28 (MVAPVWYLVAAALLVGFILFLTRSRGRA). The interval 1-114 (MVAPVWYLVA…VEKPAETHLS (114 aa)) is mediates interaction with CDK5RAP3. The Cytoplasmic segment spans residues 29–314 (ASAGQEPLHN…GRESPAQAPA (286 aa)). Disordered stretches follow at residues 31-75 (AGQE…SRLQ) and 100-186 (QEEE…QREH). Ser72 and Ser114 each carry phosphoserine. The segment at 118–216 (GAKKLRKLEE…MTEEQSQSFL (99 aa)) is mediates interaction with TRIP4. Positions 124–186 (KLEEKQARKA…AREEQAQREH (63 aa)) are enriched in basic and acidic residues. The short motif at 195–209 (AFVVEEEGVGETMTE) is the UFM1-interacting motif (UFIM) element. Positions 216-314 (LTEFINYIKQ…GRESPAQAPA (99 aa)) are mediates interaction with UFL1. The PCI domain maps to 229-273 (VLLEDLASQVGLRTQDTINRIQDLLAEGTITGVIDDRGKFIYITP). Residue Lys267 forms a Glycyl lysine isopeptide (Lys-Gly) (interchain with G-Cter in UFM1) linkage.

This sequence belongs to the DDRGK1 family. As to quaternary structure, component of the UFM1 ribosome E3 ligase (UREL) complex, composed of UFL1, DDRGK1 and CDK5RAP3. Interacts with (unphosphorylated) ERN1/IRE1-alpha; interaction is dependent on UFM1 and takes place in response to endoplasmic reticulum stress, regulating ERN1/IRE1-alpha stability. Interacts with NFKBIA. Interacts with SOX9. Post-translationally, ubiquitinated. Ubiquitination probably triggers proteasomal degradation and is negatively regulated by UFL1, the enzyme involved in the ufmylation of DDRGK1. Ufmylated; conjugated to ubiquitin-like protein UFM1, probably at Lys-267 by UFL1. The relevance of ufmylation is however unclear: as DDRGK1 acts as a substrate adapters for ufmylation, it is uncertain whether ufmylation is a collateral effect of ufmylation process or is required to regulate its activity. As to expression, widely expressed (at protein level). In the brain, highest levels in medulla oblongata, followed by cerebral cortex, cerebellum and frontal lobe.

Its subcellular location is the endoplasmic reticulum membrane. Component of the UFM1 ribosome E3 ligase (UREL) complex, a multiprotein complex that catalyzes ufmylation of endoplasmic reticulum-docked proteins. The UREL complex plays a key role in ribosome recycling by mediating mono-ufmylation of the RPL26/uL24 subunit of the 60S ribosome following ribosome dissociation: ufmylation weakens the junction between post-termination 60S subunits and SEC61 translocons, promoting release and recycling of the large ribosomal subunit from the endoplasmic reticulum membrane. Ufmylation of RPL26/uL24 and subsequent 60S ribosome recycling either take place after normal termination of translation or after ribosome stalling during cotranslational translocation at the endoplasmic reticulum. Within the UREL complex, DDRGK1 tethers the complex to the endoplasmic reticulum membrane to restrict its activity to endoplasmic reticulum-docked ribosomes and acts as an ufmylation 'reader': following RPL26/uL24 ufmylation, DDRGK1 specifically binds to ufmylated RPL26/uL24 via its UFIM motif, resulting in stable association between the 60S ribosome and the UREL complex, followed by dissociation of the 60S ribosome subunit from the endoplasmic reticulum membrane. The UREL complex is also involved in reticulophagy in response to endoplasmic reticulum stress by promoting ufmylation of proteins such as CYB5R3 and RPN1, thereby promoting lysosomal degradation of ufmylated proteins. Ufmylation-dependent reticulophagy inhibits the unfolded protein response (UPR) by regulating ERN1/IRE1-alpha stability. Acts as a regulator of immunity by promoting differentiation of B-cells into plasma cells: acts by promoting expansion of the endoplasmic reticulum and regulating the unfolded protein response (UPR). May also be required for TRIP4 ufmylation. May play a role in NF-kappa-B-mediated transcription through regulation of the phosphorylation and the degradation of NFKBIA, the inhibitor of NF-kappa-B. Plays a role in cartilage development through SOX9, inhibiting the ubiquitin-mediated proteasomal degradation of this transcriptional regulator. Required for stabilization and ufmylation of ATG9A. In Homo sapiens (Human), this protein is DDRGK domain-containing protein 1.